The sequence spans 306 residues: Acetaldehyde dehydrogenase (306 aa).

Residue C131 is the Acyl-thioester intermediate of the active site. Residues 162–170 (SAGPGTRKN) and N273 each bind NAD(+).

Belongs to the acetaldehyde dehydrogenase family.

It catalyses the reaction acetaldehyde + NAD(+) + CoA = acetyl-CoA + NADH + H(+). This chain is Acetaldehyde dehydrogenase, found in Albidiferax ferrireducens (strain ATCC BAA-621 / DSM 15236 / T118) (Rhodoferax ferrireducens).